A 265-amino-acid chain; its full sequence is tRNA pseudouridine synthase A (265 aa).

Catalysis depends on aspartate 52, which acts as the Nucleophile. Substrate is bound at residue tyrosine 110. Residues 244-265 form a disordered region; sequence FYRDGPPARTPGGTTDAEEDEG.

The protein belongs to the tRNA pseudouridine synthase TruA family. As to quaternary structure, homodimer.

It carries out the reaction uridine(38/39/40) in tRNA = pseudouridine(38/39/40) in tRNA. Its function is as follows. Formation of pseudouridine at positions 38, 39 and 40 in the anticodon stem and loop of transfer RNAs. The polypeptide is tRNA pseudouridine synthase A (Myxococcus xanthus).